The chain runs to 129 residues: Gene 58 protein (129 aa).

Positions 87–129 are disordered; sequence GNIPVQRKPARKPSRRVFGESRSSGSSGSTVRPGIRGRSTPWS. Over residues 106-115 the composition is skewed to low complexity; the sequence is ESRSSGSSGS.

This is Gene 58 protein (58) from Mycobacterium (Mycobacteriophage D29).